The primary structure comprises 330 residues: Thiosulfate transporter TsuA (330 aa).

At 1–2 (MI) the chain is on the periplasmic side. The helical transmembrane segment at 3–18 (WTGLLVGFLFGIVLQR) threads the bilayer. Residues 19-36 (GRICFNSAFRDVLLFKDN) are Cytoplasmic-facing. A helical membrane pass occupies residues 37 to 59 (YLFKLAVFTLALEMILFVLLSQV). The Periplasmic portion of the chain corresponds to 60–70 (GLMQMNPKPLN). A helical membrane pass occupies residues 71-87 (LVGNIIGGFVFGLGMVL). At 88-102 (AGGCASGVTYRVGEG) the chain is on the cytoplasmic side. The helical transmembrane segment at 103–121 (LTTAWFAALFYGLGAYATK) threads the bilayer. The Periplasmic segment spans residues 122 to 162 (SGAFSWWLSWVGQFKSPLSVEESAYYVKGAGPTISSVLGLN). The helical transmembrane segment at 163-180 (PWIPALVIAALFILWAFG) threads the bilayer. Topologically, residues 181–189 (TKTTSRETK) are cytoplasmic. The helical transmembrane segment at 190 to 211 (FNWKIASVCLALVAGLGFITST) threads the bilayer. At 212 to 239 (LSGRKYGLGITGGWINLFQGFLTNSPLN) the chain is on the periplasmic side. A helical membrane pass occupies residues 240 to 258 (WEGLEIVGIILGAGVAAAV). The Cytoplasmic portion of the chain corresponds to 259 to 269 (AGEFKLRMPKN). A helical membrane pass occupies residues 270–289 (PVTYLQVGIGGLLMGIGAVT). The Periplasmic segment spans residues 290–306 (AGGCNIGHFLTGVPQLA). Residues 307-326 (LSSWLASIFFILGNWTMAWI) form a helical membrane-spanning segment. Over 327–330 (LFRR) the chain is Cytoplasmic.

Belongs to the TsuA/YedE (TC 9.B.102) family.

Its subcellular location is the cell inner membrane. It catalyses the reaction thiosulfate(in) = thiosulfate(out). Mediates thiosulfate uptake. The protein is Thiosulfate transporter TsuA of Spirochaeta thermophila (strain ATCC 700085 / DSM 6578 / Z-1203).